Reading from the N-terminus, the 109-residue chain is Oncomodulin-2 (109 aa).

2 EF-hand domains span residues 39–74 and 78–109; these read MSASQVKDVFRFIDNDQSGYLDEEELKFFLQKFESG and LTESETKSLMAAADNDGDGKIGAEEFQEMVHS. Ca(2+)-binding residues include aspartate 52, aspartate 54, serine 56, tyrosine 58, glutamate 63, aspartate 91, aspartate 93, aspartate 95, lysine 97, and glutamate 102.

It belongs to the parvalbumin family.

This is Oncomodulin-2 (OCM2) from Homo sapiens (Human).